The sequence spans 354 residues: UDP-N-acetylglucosamine--N-acetylmuramyl-(pentapeptide) pyrophosphoryl-undecaprenol N-acetylglucosamine transferase 3 (354 aa).

UDP-N-acetyl-alpha-D-glucosamine is bound by residues 12-14 (TAG), arginine 163, serine 193, and glutamine 287.

Belongs to the glycosyltransferase 28 family. MurG subfamily.

The protein localises to the cell membrane. The enzyme catalyses di-trans,octa-cis-undecaprenyl diphospho-N-acetyl-alpha-D-muramoyl-L-alanyl-D-glutamyl-meso-2,6-diaminopimeloyl-D-alanyl-D-alanine + UDP-N-acetyl-alpha-D-glucosamine = di-trans,octa-cis-undecaprenyl diphospho-[N-acetyl-alpha-D-glucosaminyl-(1-&gt;4)]-N-acetyl-alpha-D-muramoyl-L-alanyl-D-glutamyl-meso-2,6-diaminopimeloyl-D-alanyl-D-alanine + UDP + H(+). Its pathway is cell wall biogenesis; peptidoglycan biosynthesis. Functionally, cell wall formation. Catalyzes the transfer of a GlcNAc subunit on undecaprenyl-pyrophosphoryl-MurNAc-pentapeptide (lipid intermediate I) to form undecaprenyl-pyrophosphoryl-MurNAc-(pentapeptide)GlcNAc (lipid intermediate II). In Bacillus cereus (strain ATCC 14579 / DSM 31 / CCUG 7414 / JCM 2152 / NBRC 15305 / NCIMB 9373 / NCTC 2599 / NRRL B-3711), this protein is UDP-N-acetylglucosamine--N-acetylmuramyl-(pentapeptide) pyrophosphoryl-undecaprenol N-acetylglucosamine transferase 3.